The primary structure comprises 679 residues: UvrABC system protein B (679 aa).

The 384-residue stretch at 31–414 folds into the Helicase ATP-binding domain; the sequence is ENLTDGLAHQ…ELEKSGSEII (384 aa). 44 to 51 provides a ligand contact to ATP; it reads GVTGSGKT. The Beta-hairpin motif lies at 97 to 120; that stretch reads YYDYYQPEAYVPSSDTFIEKDASI. One can recognise a Helicase C-terminal domain in the interval 436 to 589; sequence QVDDLLSEAR…QTKYNEEHGI (154 aa). Residues 639–674 enclose the UVR domain; the sequence is QQQIKKLEQQMYKFAQDLEFEKAAAIRDQLHQLREQ.

Belongs to the UvrB family. In terms of assembly, forms a heterotetramer with UvrA during the search for lesions. Interacts with UvrC in an incision complex.

It localises to the cytoplasm. Its function is as follows. The UvrABC repair system catalyzes the recognition and processing of DNA lesions. A damage recognition complex composed of 2 UvrA and 2 UvrB subunits scans DNA for abnormalities. Upon binding of the UvrA(2)B(2) complex to a putative damaged site, the DNA wraps around one UvrB monomer. DNA wrap is dependent on ATP binding by UvrB and probably causes local melting of the DNA helix, facilitating insertion of UvrB beta-hairpin between the DNA strands. Then UvrB probes one DNA strand for the presence of a lesion. If a lesion is found the UvrA subunits dissociate and the UvrB-DNA preincision complex is formed. This complex is subsequently bound by UvrC and the second UvrB is released. If no lesion is found, the DNA wraps around the other UvrB subunit that will check the other stand for damage. This chain is UvrABC system protein B, found in Haemophilus influenzae (strain ATCC 51907 / DSM 11121 / KW20 / Rd).